The sequence spans 314 residues: uncharacterized protein (314 aa).

Positions 1-18 (MLIQILFLIILTLNCSYS) are cleaved as a signal peptide. N-linked (GlcNAc...) asparagine glycans are attached at residues N68, N72, N106, and N256.

The protein localises to the secreted. This is an uncharacterized protein from Caenorhabditis elegans.